Reading from the N-terminus, the 942-residue chain is UvrABC system protein A (942 aa).

Position 32–39 (Gly32–Ser39) interacts with ATP. The segment at Cys251–Cys278 adopts a C4-type zinc-finger fold. ABC transporter domains lie at Trp308–Ile589 and Gly609–Lys937. Gly641–Ser648 contacts ATP. The C4-type zinc finger occupies Cys740–Cys766.

This sequence belongs to the ABC transporter superfamily. UvrA family. In terms of assembly, forms a heterotetramer with UvrB during the search for lesions.

The protein resides in the cytoplasm. In terms of biological role, the UvrABC repair system catalyzes the recognition and processing of DNA lesions. UvrA is an ATPase and a DNA-binding protein. A damage recognition complex composed of 2 UvrA and 2 UvrB subunits scans DNA for abnormalities. When the presence of a lesion has been verified by UvrB, the UvrA molecules dissociate. The chain is UvrABC system protein A from Streptococcus pyogenes serotype M6 (strain ATCC BAA-946 / MGAS10394).